The chain runs to 392 residues: Protein FAM53C (392 aa).

Position 1 is an N-acetylmethionine (Met1). Positions 78 to 119 (LRPPSRGNSPKEQPFSQVLRPEPPDPEKLPVPPAPPSKRHCR) are disordered. The span at 83–93 (RGNSPKEQPFS) shows a compositional bias: polar residues. A phosphoserine mark is found at Ser122, Ser162, Ser232, Ser234, Ser255, and Ser273. Disordered regions lie at residues 141–167 (LWTPIKHRGSGGGGGPQVPHQSPPKRV) and 204–294 (RPCA…EDPR). Low complexity predominate over residues 241–256 (ASRFLPSARSSPASSP). Residues 278-294 (LDARKTGVKRRHEEDPR) are compositionally biased toward basic and acidic residues. A Phosphoserine modification is found at Ser299. Positions 341–364 (ASCSPTGGSSQVLSESEEEEEGAV) are disordered.

The protein belongs to the FAM53 family.

The chain is Protein FAM53C from Homo sapiens (Human).